Reading from the N-terminus, the 273-residue chain is 4-hydroxy-tetrahydrodipicolinate reductase (273 aa).

Residues 8-13 (GAAGRM), Glu-34, 102-104 (GTT), and 128-131 (SSNM) each bind NAD(+). Catalysis depends on His-160, which acts as the Proton donor/acceptor. His-161 contacts (S)-2,3,4,5-tetrahydrodipicolinate. Lys-164 serves as the catalytic Proton donor. Position 170–171 (170–171 (GT)) interacts with (S)-2,3,4,5-tetrahydrodipicolinate.

It belongs to the DapB family.

It localises to the cytoplasm. It carries out the reaction (S)-2,3,4,5-tetrahydrodipicolinate + NAD(+) + H2O = (2S,4S)-4-hydroxy-2,3,4,5-tetrahydrodipicolinate + NADH + H(+). It catalyses the reaction (S)-2,3,4,5-tetrahydrodipicolinate + NADP(+) + H2O = (2S,4S)-4-hydroxy-2,3,4,5-tetrahydrodipicolinate + NADPH + H(+). It participates in amino-acid biosynthesis; L-lysine biosynthesis via DAP pathway; (S)-tetrahydrodipicolinate from L-aspartate: step 4/4. In terms of biological role, catalyzes the conversion of 4-hydroxy-tetrahydrodipicolinate (HTPA) to tetrahydrodipicolinate. This is 4-hydroxy-tetrahydrodipicolinate reductase from Methanobrevibacter smithii (strain ATCC 35061 / DSM 861 / OCM 144 / PS).